We begin with the raw amino-acid sequence, 144 residues long: Large ribosomal subunit protein uL15 (144 aa).

Positions 1 to 53 are disordered; that stretch reads MRLNTLSPAEGAKHNAKRLGRGIGSGLGKTSGRGHKGQKARTGGGVRRGFEGG. Gly residues predominate over residues 21–31; the sequence is RGIGSGLGKTS.

It belongs to the universal ribosomal protein uL15 family. As to quaternary structure, part of the 50S ribosomal subunit.

Binds to the 23S rRNA. The chain is Large ribosomal subunit protein uL15 from Histophilus somni (strain 129Pt) (Haemophilus somnus).